The chain runs to 317 residues: Malate dehydrogenase (317 aa).

NAD(+) is bound by residues 13–18 (GAGNIG) and Asp-38. Residues Arg-87 and Arg-93 each coordinate substrate. Residues Asn-100 and 123 to 125 (VTN) contribute to the NAD(+) site. The substrate site is built by Asn-125 and Arg-156. His-180 acts as the Proton acceptor in catalysis.

This sequence belongs to the LDH/MDH superfamily. MDH type 3 family.

It catalyses the reaction (S)-malate + NAD(+) = oxaloacetate + NADH + H(+). Its function is as follows. Catalyzes the reversible oxidation of malate to oxaloacetate. The sequence is that of Malate dehydrogenase from Anaplasma marginale (strain St. Maries).